Consider the following 153-residue polypeptide: UPF0102 protein Pnap_0271 (153 aa).

It belongs to the UPF0102 family.

The chain is UPF0102 protein Pnap_0271 from Polaromonas naphthalenivorans (strain CJ2).